Here is a 209-residue protein sequence, read N- to C-terminus: Uracil phosphoribosyltransferase (209 aa).

5-phospho-alpha-D-ribose 1-diphosphate-binding positions include Arg-79, Arg-104, and 131 to 139 (DPMLATGGS). Uracil-binding positions include Ile-194 and 199 to 201 (GDA). Asp-200 contacts 5-phospho-alpha-D-ribose 1-diphosphate.

The protein belongs to the UPRTase family. It depends on Mg(2+) as a cofactor.

It carries out the reaction UMP + diphosphate = 5-phospho-alpha-D-ribose 1-diphosphate + uracil. It participates in pyrimidine metabolism; UMP biosynthesis via salvage pathway; UMP from uracil: step 1/1. Allosterically activated by GTP. Catalyzes the conversion of uracil and 5-phospho-alpha-D-ribose 1-diphosphate (PRPP) to UMP and diphosphate. The polypeptide is Uracil phosphoribosyltransferase (Clostridium novyi (strain NT)).